Here is a 210-residue protein sequence, read N- to C-terminus: Neuroendocrine protein 7B2 (210 aa).

An N-terminal signal peptide occupies residues Met-1–Ala-24. The cysteines at positions 118 and 128 are disulfide-linked. Ser-139 and Ser-203 each carry phosphoserine.

The protein belongs to the 7B2 family. In terms of assembly, interacts with PCSK2/PC2 early in the secretory pathway. Dissociation occurs at later stages. Proteolytically cleaved in the Golgi by a furin-like convertase to generate bioactive peptides. In terms of processing, sulfated on tyrosine residues.

It localises to the secreted. Functionally, acts as a molecular chaperone for PCSK2/PC2, preventing its premature activation in the regulated secretory pathway. Binds to inactive PCSK2 in the endoplasmic reticulum and facilitates its transport from there to later compartments of the secretory pathway where it is proteolytically matured and activated. Also required for cleavage of PCSK2 but does not appear to be involved in its folding. Plays a role in regulating pituitary hormone secretion. The C-terminal peptide inhibits PCSK2 in vitro. The chain is Neuroendocrine protein 7B2 (Scg5) from Rattus norvegicus (Rat).